The sequence spans 387 residues: Phosphoglycerate kinase (387 aa).

Substrate-binding positions include D21–N23, R36, H59–R62, R113, and R146. Residues K197, E314, and G340–T343 each bind ATP.

It belongs to the phosphoglycerate kinase family. As to quaternary structure, monomer.

The protein localises to the cytoplasm. It catalyses the reaction (2R)-3-phosphoglycerate + ATP = (2R)-3-phospho-glyceroyl phosphate + ADP. Its pathway is carbohydrate degradation; glycolysis; pyruvate from D-glyceraldehyde 3-phosphate: step 2/5. The sequence is that of Phosphoglycerate kinase from Tolumonas auensis (strain DSM 9187 / NBRC 110442 / TA 4).